Reading from the N-terminus, the 132-residue chain is Large ribosomal subunit protein uL14 (132 aa).

It belongs to the universal ribosomal protein uL14 family. Part of the 50S ribosomal subunit. Forms a cluster with proteins L3 and L24e, part of which may contact the 16S rRNA in 2 intersubunit bridges.

In terms of biological role, binds to 23S rRNA. Forms part of two intersubunit bridges in the 70S ribosome. This Methanosarcina acetivorans (strain ATCC 35395 / DSM 2834 / JCM 12185 / C2A) protein is Large ribosomal subunit protein uL14.